The following is a 314-amino-acid chain: Ficolin-2 (314 aa).

The N-terminal stretch at 1–17 (MALGSAALFVLTLTVHA) is a signal peptide. Residues 40-96 (GCPGLPGAAGPKGEAGAKGDRGESGLPGIPGKEGPTGPKGNQGEKGIRGEKGDSGPS) form the Collagen-like domain. Residues 49 to 101 (GPKGEAGAKGDRGESGLPGIPGKEGPTGPKGNQGEKGIRGEKGDSGPSQSCAT) form a disordered region. Positions 97–314 (QSCATGPRTC…KVSEMKVRLI (218 aa)) constitute a Fibrinogen C-terminal domain. 2 cysteine pairs are disulfide-bonded: cysteine 99–cysteine 127 and cysteine 106–cysteine 134. Positions 250, 252, 254, and 256 each coordinate Ca(2+). Cysteine 258 and cysteine 271 are disulfide-bonded. Asparagine 301 carries N-linked (GlcNAc...) asparagine glycosylation.

It belongs to the ficolin lectin family. In terms of assembly, homotrimer. Interacts with elastin. Interacts with MASP1 and MASP2.

It localises to the secreted. In terms of biological role, may function in innate immunity through activation of the lectin complement pathway. Calcium-dependent and GlcNAc-binding lectin. This is Ficolin-2 (Fcn2) from Mus musculus (Mouse).